The chain runs to 370 residues: Aminomethyltransferase (370 aa).

It belongs to the GcvT family. The glycine cleavage system is composed of four proteins: P, T, L and H.

The enzyme catalyses N(6)-[(R)-S(8)-aminomethyldihydrolipoyl]-L-lysyl-[protein] + (6S)-5,6,7,8-tetrahydrofolate = N(6)-[(R)-dihydrolipoyl]-L-lysyl-[protein] + (6R)-5,10-methylene-5,6,7,8-tetrahydrofolate + NH4(+). In terms of biological role, the glycine cleavage system catalyzes the degradation of glycine. The chain is Aminomethyltransferase from Clostridium botulinum (strain Kyoto / Type A2).